The primary structure comprises 162 residues: Beta-carotene hydroxylase (162 aa).

The region spanning 8–135 (VATVLVMELT…GRDHCVSFGF (128 aa)) is the Fatty acid hydroxylase domain.

It belongs to the sterol desaturase family.

The catalysed reaction is all-trans-beta-carotene + 4 reduced [2Fe-2S]-[ferredoxin] + 2 O2 + 4 H(+) = all-trans-zeaxanthin + 4 oxidized [2Fe-2S]-[ferredoxin] + 2 H2O. It participates in carotenoid biosynthesis; astaxanthin biosynthesis. In terms of biological role, catalyzes the hydroxylation reaction from beta-carotene to zeaxanthin via beta-cryptoxanthin. The polypeptide is Beta-carotene hydroxylase (crtZ) (Paracoccus sp. (strain PC1) (Alcaligenes sp. (strain PC1))).